The following is a 298-amino-acid chain: MLKIGSHVSMSGKKMLLAASEEAVSYGATTFMIYTGAPQNTRRKPIEELNIEAGRKHMEQNGIEEIIVHAPYIINVGNTTKPETFQLGVDFLRMEIERTSALGVAKQIVLHPGAHVGAGADAGIQQIIKGLNEVLTPDQTVNIALETMAGKGTECGRSFEEIAKIIDGVKYNEKLSVCFDTCHTHDAGYDIVNNFDGVLNEFDKIVGIDRLQVLHINDSKNVRGAGKDRHENIGFGHIGYKALHHIVHHPQLTHVPKILETPYVGEDKKDKKPPYKLEIEMLKNGTFDEGLLEKIKAQ.

Zn(2+) contacts are provided by histidine 69, histidine 111, glutamate 146, aspartate 180, histidine 183, histidine 215, aspartate 228, histidine 230, and glutamate 260.

Belongs to the AP endonuclease 2 family. Zn(2+) is required as a cofactor.

The enzyme catalyses Endonucleolytic cleavage to 5'-phosphooligonucleotide end-products.. In terms of biological role, endonuclease IV plays a role in DNA repair. It cleaves phosphodiester bonds at apurinic or apyrimidinic (AP) sites, generating a 3'-hydroxyl group and a 5'-terminal sugar phosphate. The sequence is that of Probable endonuclease 4 from Bacillus anthracis (strain A0248).